We begin with the raw amino-acid sequence, 416 residues long: 3-hydroxy-3-methylglutaryl coenzyme A reductase AN1593 (416 aa).

Residue Glu-103 is the Charge relay system of the active site. Residue Asn-167 is glycosylated (N-linked (GlcNAc...) asparagine). Lys-236 functions as the Charge relay system in the catalytic mechanism. N-linked (GlcNAc...) asparagine glycosylation is present at Asn-277. Asp-312 functions as the Charge relay system in the catalytic mechanism. A helical membrane pass occupies residues 380–400 (LALLVAAGVLAGELSLCSALS). His-408 acts as the Proton donor in catalysis.

This sequence belongs to the HMG-CoA reductase family.

Its subcellular location is the membrane. It carries out the reaction (R)-mevalonate + 2 NADP(+) + CoA = (3S)-3-hydroxy-3-methylglutaryl-CoA + 2 NADPH + 2 H(+). The protein operates within metabolic intermediate biosynthesis; (R)-mevalonate biosynthesis; (R)-mevalonate from acetyl-CoA: step 3/3. 3-hydroxy-3-methylglutaryl coenzyme A reductase; part of the gene cluster that mediates the biosynthesis of the diterpene ent-pimara-8(14),15-diene (PD). Within the cluster, the HMG-CoA reductase AN1593 functions in the mevalonate pathway, which produces isoprenoid precursors. The geranylgeranyl pyrophosphate (GGPP) synthase AN1592 is needed in the formation of GGPP, the precursor for diterpenes. Lastly, the pimaradiene synthase pbcA performs the 2 cyclization steps that convert GGPP to ent-pimara-8(14),15-diene. The putative roles of the remaining cluster enzymes in ent-pimara-8(14),15-diene biosynthesis is unclear. The cytochrome P450 monooxygenase AN1598, the glutathione S-transferase AN1595, the oxidoreductases AN1596 and AN1597 probably function as decorative enzymes. It is possible that in biological conditions the compound is oxidized to ent-pimara-8(14),15-dien-19-oic acid, which is a bioactive diterpene compound predominant in many plant extracts. This Emericella nidulans (strain FGSC A4 / ATCC 38163 / CBS 112.46 / NRRL 194 / M139) (Aspergillus nidulans) protein is 3-hydroxy-3-methylglutaryl coenzyme A reductase AN1593.